We begin with the raw amino-acid sequence, 73 residues long: DNA gyrase inhibitor YacG (73 aa).

Residues C12, C15, C31, and C35 each contribute to the Zn(2+) site. The segment at 47 to 73 (DYAIPGEPIDPAEPSEDRNGAEGPPTD) is disordered.

The protein belongs to the DNA gyrase inhibitor YacG family. As to quaternary structure, interacts with GyrB. Requires Zn(2+) as cofactor.

In terms of biological role, inhibits all the catalytic activities of DNA gyrase by preventing its interaction with DNA. Acts by binding directly to the C-terminal domain of GyrB, which probably disrupts DNA binding by the gyrase. The polypeptide is DNA gyrase inhibitor YacG (Methylococcus capsulatus (strain ATCC 33009 / NCIMB 11132 / Bath)).